The chain runs to 529 residues: MFS glucose transporter mfs1 (529 aa).

A run of 12 helical transmembrane segments spans residues 7-27 (VYFL…DISS), 52-72 (SITC…SFIA), 86-106 (ILWI…LLVV), 109-129 (VIAG…QAEI), 138-158 (VISL…FIQY), 179-199 (IPWG…FLFP), 272-292 (LQMW…VYIM), 301-321 (LLTA…AIIY), 330-350 (AILI…GLQG), 375-395 (AVGK…ATTI), 415-439 (AVSL…PLLW), and 446-464 (YMIF…FLTA).

This sequence belongs to the major facilitator superfamily. Sugar transporter (TC 2.A.1.1) family.

It is found in the membrane. In terms of biological role, probable MFS glucose transporter; part of the gene cluster 27 that mediates the biosynthesis of asparasone A, a sclerotium-specific anthraquinone pigment important for sclerotial survival. This Aspergillus flavus (strain ATCC 200026 / FGSC A1120 / IAM 13836 / NRRL 3357 / JCM 12722 / SRRC 167) protein is MFS glucose transporter mfs1.